A 218-amino-acid polypeptide reads, in one-letter code: Probable transaldolase (218 aa).

The Schiff-base intermediate with substrate role is filled by lysine 84.

Belongs to the transaldolase family. Type 3B subfamily.

The protein localises to the cytoplasm. It catalyses the reaction D-sedoheptulose 7-phosphate + D-glyceraldehyde 3-phosphate = D-erythrose 4-phosphate + beta-D-fructose 6-phosphate. It functions in the pathway carbohydrate degradation; pentose phosphate pathway; D-glyceraldehyde 3-phosphate and beta-D-fructose 6-phosphate from D-ribose 5-phosphate and D-xylulose 5-phosphate (non-oxidative stage): step 2/3. In terms of biological role, transaldolase is important for the balance of metabolites in the pentose-phosphate pathway. This chain is Probable transaldolase, found in Sulfurihydrogenibium sp. (strain YO3AOP1).